Reading from the N-terminus, the 79-residue chain is MIFTPFLPPADLSVFQNVKGLQNDPEEWVAVSDATEDPSGGTGLPREPALLRGSWRSRFQRALACFTKCFRGGYRALGI.

It belongs to the FAM236 family.

This is Protein FAM236A from Homo sapiens (Human).